Reading from the N-terminus, the 742-residue chain is 5-methyltetrahydropteroyltriglutamate--homocysteine methyltransferase (742 aa).

5-methyltetrahydropteroyltri-L-glutamate-binding positions include 18–21 (REWK) and Lys-112. Residues 420 to 422 (IGS) and Glu-473 each bind L-homocysteine. Residues 420 to 422 (IGS) and Glu-473 contribute to the L-methionine site. Trp-550 contacts 5-methyltetrahydropteroyltri-L-glutamate. Asp-588 serves as a coordination point for L-homocysteine. L-methionine is bound at residue Asp-588. 5-methyltetrahydropteroyltri-L-glutamate is bound at residue Glu-594. His-630, Cys-632, and Glu-654 together coordinate Zn(2+). His-683 functions as the Proton donor in the catalytic mechanism. Cys-715 is a binding site for Zn(2+).

This sequence belongs to the vitamin-B12 independent methionine synthase family. Zn(2+) serves as cofactor.

It catalyses the reaction 5-methyltetrahydropteroyltri-L-glutamate + L-homocysteine = tetrahydropteroyltri-L-glutamate + L-methionine. Its pathway is amino-acid biosynthesis; L-methionine biosynthesis via de novo pathway; L-methionine from L-homocysteine (MetE route): step 1/1. Catalyzes the transfer of a methyl group from 5-methyltetrahydrofolate to homocysteine resulting in methionine formation. This Staphylococcus aureus (strain Mu3 / ATCC 700698) protein is 5-methyltetrahydropteroyltriglutamate--homocysteine methyltransferase.